The primary structure comprises 394 residues: Penicillopepsin-3 (394 aa).

Positions Met1–Ala20 are cleaved as a signal peptide. Residues Val21–Ala70 constitute a propeptide, activation peptide. Residues Tyr87–Ala392 form the Peptidase A1 domain. Active-site residues include Asp103 and Asp284. Residues Cys320 and Cys355 are joined by a disulfide bond.

It belongs to the peptidase A1 family. In terms of assembly, monomer.

The protein resides in the secreted. The enzyme catalyses Hydrolysis of proteins with broad specificity similar to that of pepsin A, preferring hydrophobic residues at P1 and P1', but also cleaving 20-Gly-|-Glu-21 in the B chain of insulin. Clots milk, and activates trypsinogen.. In terms of biological role, secreted aspartic endopeptidase that allows assimilation of proteinaceous substrates. The scissile peptide bond is attacked by a nucleophilic water molecule activated by two aspartic residues in the active site. Shows a broad primary substrate specificity. Favors hydrophobic residues at the P1 and P1' positions, but can also activate trypsinogen and hydrolyze the B chain of insulin between positions 'Gly-20' and 'Glu-21'. This chain is Penicillopepsin-3, found in Penicillium janthinellum (Penicillium vitale).